A 267-amino-acid polypeptide reads, in one-letter code: Tryptophan synthase alpha chain (267 aa).

Residues glutamate 49 and aspartate 60 each act as proton acceptor in the active site.

The protein belongs to the TrpA family. As to quaternary structure, tetramer of two alpha and two beta chains.

The enzyme catalyses (1S,2R)-1-C-(indol-3-yl)glycerol 3-phosphate + L-serine = D-glyceraldehyde 3-phosphate + L-tryptophan + H2O. It participates in amino-acid biosynthesis; L-tryptophan biosynthesis; L-tryptophan from chorismate: step 5/5. Its function is as follows. The alpha subunit is responsible for the aldol cleavage of indoleglycerol phosphate to indole and glyceraldehyde 3-phosphate. The sequence is that of Tryptophan synthase alpha chain from Acinetobacter baylyi (strain ATCC 33305 / BD413 / ADP1).